Reading from the N-terminus, the 278-residue chain is Elongation factor Ts (278 aa).

Residues 80–83 form an involved in Mg(2+) ion dislocation from EF-Tu region; that stretch reads TDFV.

It belongs to the EF-Ts family.

It localises to the cytoplasm. In terms of biological role, associates with the EF-Tu.GDP complex and induces the exchange of GDP to GTP. It remains bound to the aminoacyl-tRNA.EF-Tu.GTP complex up to the GTP hydrolysis stage on the ribosome. This chain is Elongation factor Ts, found in Paenarthrobacter aurescens (strain TC1).